The following is a 462-amino-acid chain: Kinetochore protein Nuf2-A (462 aa).

Coiled-coil stretches lie at residues 143-277 and 308-461; these read SSYK…DKCD and EIHR…RLSR. Positions 239–259 are disordered; the sequence is RMKSQIVESPEQRKSKTERMK. Over residues 248-259 the composition is skewed to basic and acidic residues; it reads PEQRKSKTERMK.

This sequence belongs to the NUF2 family. In terms of assembly, component of the NDC80 complex, which is composed of ndc80, cdca1, spbc24 and spbc25. The NDC80 complex interacts with mis12 and zwint.

The protein localises to the nucleus. It is found in the chromosome. Its subcellular location is the centromere. It localises to the kinetochore. In terms of biological role, acts as a component of the essential kinetochore-associated NDC80 complex, which is required for chromosome segregation and spindle checkpoint activity. Required for kinetochore integrity and the organization of stable microtubule binding sites in the outer plate of the kinetochore. The NDC80 complex synergistically enhances the affinity of the SKA1 complex for microtubules and may allow the NDC80 complex to track depolymerizing microtubules. In Xenopus laevis (African clawed frog), this protein is Kinetochore protein Nuf2-A (nuf2-a).